A 450-amino-acid chain; its full sequence is Neuronal acetylcholine receptor subunit alpha-10 (450 aa).

The signal sequence occupies residues 1–24 (MGLRSHHLSLGLLLLFLLPAECLG). Topologically, residues 25-237 (AEGRLALKLF…FTLLLRRRAA (213 aa)) are extracellular. Residues asparagine 40 and asparagine 56 are each glycosylated (N-linked (GlcNAc...) asparagine). 2 disulfides stabilise this stretch: cysteine 154–cysteine 168 and cysteine 218–cysteine 219. The next 3 helical transmembrane spans lie at 238–258 (AYVC…PLAF), 268–288 (VSLG…LAES), and 302–322 (YMAT…IMNL). Residues 323–428 (HYCGPSVRPV…WKRLARVMDR (106 aa)) lie on the Cytoplasmic side of the membrane. Residues 355-380 (EPCGQSRPPELSPSPQSPEGGAGPPA) form a disordered region. The helical transmembrane segment at 429–449 (FFLAIFFSMALVMSLLVLVQA) threads the bilayer.

The protein belongs to the ligand-gated ion channel (TC 1.A.9) family. Acetylcholine receptor (TC 1.A.9.1) subfamily. Alpha-10/CHRNA10 sub-subfamily. As to quaternary structure, forms homo- or heterooligomeric channels in conjunction with CHRNA10. The native outer hair cell receptor may be composed of CHRNA9:CHRNA10 heterooligomers. Found in the stoichiometric form (CHRNA9)2:(CHRNA10)3. As to expression, expressed in inner-ear tissue, tonsil, immortalized B-cells, cultured T-cells and peripheral blood lymphocytes.

The protein resides in the synaptic cell membrane. Its subcellular location is the cell membrane. It carries out the reaction Ca(2+)(in) = Ca(2+)(out). The enzyme catalyses K(+)(in) = K(+)(out). The catalysed reaction is Na(+)(in) = Na(+)(out). It catalyses the reaction Mg(2+)(in) = Mg(2+)(out). With respect to regulation, activated by a myriad of ligands such as acetylcholine. AChR activity is inhibited by the antagonists alpha-conotoxins RgIA and GeXXA, small disulfide-constrained peptides from cone snails. Its function is as follows. Component of neuronal acetylcholine receptors (nAChRs) that function as pentameric, ligand-gated cation channels with high calcium permeability. nAChRs are excitatory neurotrasnmitter receptors formed by a collection of nAChR subunits. Each nAchR subunit confers differential attributes to channel properties, including activation, deactivation and desensitization kinetics, pH sensitivity, cation permeability, and binding to allosteric modulators. Forms heteropentamers with CHRNA9. Expressed in the inner ear, in sympathetic neurons and in other non-neuronal cells, such as skin keratinocytes and lymphocytes. nAChR formed by CHRNA9:CHRNA10 is involved in modulation of auditory stimuli. The channel is permeable to a range of divalent cations including calcium, the influx of which may activate a potassium current which hyperpolarizes the cell membrane. In the ear, mediates synaptic transmission between efferent olivocochlear fibers and hair cells of the cochlea, this may lead to a reduction in basilar membrane motion, altering the activity of auditory nerve fibers and reducing the range of dynamic hearing. This may protect against acoustic trauma. May also regulate keratinocyte adhesion. In Homo sapiens (Human), this protein is Neuronal acetylcholine receptor subunit alpha-10.